A 213-amino-acid chain; its full sequence is Nickel-cobalt-cadmium resistance protein NccN (213 aa).

Transmembrane regions (helical) follow at residues 24–44 (IGIWRVVVSVVLIALITGHSQ), 48–68 (TWISAALLTVGMLGVTMATVG), 113–133 (ESITLAAILALAFALMYPAVI), and 180–200 (NLADSVWFLGMTIVVNAVELA).

It to A.eutrophus CzcN.

The protein resides in the cell inner membrane. Its function is as follows. Component of the NCC cation-efflux system that confers resistance to nickel, cobalt and cadmium. Appears to be involved in metal specificity but affects only nickel resistance. May be involved in nickel transport. This Alcaligenes xylosoxydans xylosoxydans (Achromobacter xylosoxidans) protein is Nickel-cobalt-cadmium resistance protein NccN (nccN).